Consider the following 493-residue polypeptide: uncharacterized protein (493 aa).

Ser-328 bears the Phosphoserine mark. Residues 466-486 (AESNSGRGQNSKTKTTSVNLS) show a composition bias toward polar residues. The tract at residues 466-493 (AESNSGRGQNSKTKTTSVNLSRNKRTRT) is disordered.

This is an uncharacterized protein from Schizosaccharomyces pombe (strain 972 / ATCC 24843) (Fission yeast).